The primary structure comprises 334 residues: Ketol-acid reductoisomerase (NADP(+)) (334 aa).

Positions 1-181 constitute a KARI N-terminal Rossmann domain; the sequence is MTTVYYDQDV…GATRAGVIET (181 aa). Residues 25–28, arginine 48, serine 52, and 82–85 contribute to the NADP(+) site; these read YGSQ and DEIQ. Histidine 107 is a catalytic residue. Glycine 133 provides a ligand contact to NADP(+). A KARI C-terminal knotted domain is found at 182-327; it reads TFKEETETDL…RELREMMPFI (146 aa). Mg(2+)-binding residues include aspartate 190, glutamate 194, glutamate 226, and glutamate 230. Serine 251 contributes to the substrate binding site.

Belongs to the ketol-acid reductoisomerase family. The cofactor is Mg(2+).

It carries out the reaction (2R)-2,3-dihydroxy-3-methylbutanoate + NADP(+) = (2S)-2-acetolactate + NADPH + H(+). The enzyme catalyses (2R,3R)-2,3-dihydroxy-3-methylpentanoate + NADP(+) = (S)-2-ethyl-2-hydroxy-3-oxobutanoate + NADPH + H(+). It participates in amino-acid biosynthesis; L-isoleucine biosynthesis; L-isoleucine from 2-oxobutanoate: step 2/4. The protein operates within amino-acid biosynthesis; L-valine biosynthesis; L-valine from pyruvate: step 2/4. Involved in the biosynthesis of branched-chain amino acids (BCAA). Catalyzes an alkyl-migration followed by a ketol-acid reduction of (S)-2-acetolactate (S2AL) to yield (R)-2,3-dihydroxy-isovalerate. In the isomerase reaction, S2AL is rearranged via a Mg-dependent methyl migration to produce 3-hydroxy-3-methyl-2-ketobutyrate (HMKB). In the reductase reaction, this 2-ketoacid undergoes a metal-dependent reduction by NADPH to yield (R)-2,3-dihydroxy-isovalerate. The polypeptide is Ketol-acid reductoisomerase (NADP(+)) (Staphylococcus aureus (strain Mu3 / ATCC 700698)).